The chain runs to 428 residues: 3-phosphoshikimate 1-carboxyvinyltransferase (428 aa).

3-phosphoshikimate contacts are provided by Lys-23, Ser-24, and Arg-28. Residue Lys-23 participates in phosphoenolpyruvate binding. Phosphoenolpyruvate contacts are provided by Gly-97 and Arg-125. Residues Ser-170, Ser-171, Gln-172, Ser-198, Asp-314, Asn-337, and Lys-341 each contribute to the 3-phosphoshikimate site. Gln-172 provides a ligand contact to phosphoenolpyruvate. The active-site Proton acceptor is Asp-314. 3 residues coordinate phosphoenolpyruvate: Arg-345, Arg-387, and Lys-412.

It belongs to the EPSP synthase family. Monomer.

The protein resides in the cytoplasm. The catalysed reaction is 3-phosphoshikimate + phosphoenolpyruvate = 5-O-(1-carboxyvinyl)-3-phosphoshikimate + phosphate. It participates in metabolic intermediate biosynthesis; chorismate biosynthesis; chorismate from D-erythrose 4-phosphate and phosphoenolpyruvate: step 6/7. In terms of biological role, catalyzes the transfer of the enolpyruvyl moiety of phosphoenolpyruvate (PEP) to the 5-hydroxyl of shikimate-3-phosphate (S3P) to produce enolpyruvyl shikimate-3-phosphate and inorganic phosphate. This chain is 3-phosphoshikimate 1-carboxyvinyltransferase, found in Erwinia tasmaniensis (strain DSM 17950 / CFBP 7177 / CIP 109463 / NCPPB 4357 / Et1/99).